Consider the following 288-residue polypeptide: Bifunctional protein FolD (288 aa).

NADP(+) is bound by residues 164–166 (GRS) and Val230.

Belongs to the tetrahydrofolate dehydrogenase/cyclohydrolase family. Homodimer.

The catalysed reaction is (6R)-5,10-methylene-5,6,7,8-tetrahydrofolate + NADP(+) = (6R)-5,10-methenyltetrahydrofolate + NADPH. It carries out the reaction (6R)-5,10-methenyltetrahydrofolate + H2O = (6R)-10-formyltetrahydrofolate + H(+). It participates in one-carbon metabolism; tetrahydrofolate interconversion. Its function is as follows. Catalyzes the oxidation of 5,10-methylenetetrahydrofolate to 5,10-methenyltetrahydrofolate and then the hydrolysis of 5,10-methenyltetrahydrofolate to 10-formyltetrahydrofolate. This Thermomicrobium roseum (strain ATCC 27502 / DSM 5159 / P-2) protein is Bifunctional protein FolD.